The chain runs to 737 residues: Protein penguin (737 aa).

The tract at residues 1 to 128 (MVSSEPKGPA…EKKDLKLKRK (128 aa)) is disordered. Composition is skewed to basic and acidic residues over residues 76-89 (KKFDKSGATGDKRL) and 107-122 (EGEKQDWNKFKKEKKD). The PUM-HD domain occupies 139–490 (EANQIHEKLR…EILEQIEAPI (352 aa)). 5 Pumilio repeats span residues 167–202 (NVGDTISKVVKAHDTARVIQSMLKYASPALRAEISE), 203–238 (KLLPFTVEMCQSKYAQFCVQRMLKYGAPATKAKLVD), 239–274 (SLYGHIVRLAGHSIGSGLLDSMYQSATPNQRIYMRQ), 388–425 (NIKEHLLKIANHEHGHVFLISLLNALDDTKATKKAIYD), and 426–462 (HLHGDLKALMSSPYGRRVIQWLVAPGDTTCFHPEFIR). Residues 577-638 (VESSSDDEDE…EEEPAAPLVS (62 aa)) are disordered. The span at 580–600 (SSDDEDEDEDEDEESDDEGDE) shows a compositional bias: acidic residues. The segment covering 601 to 615 (KEQKEAAADDAEPKV) has biased composition (basic and acidic residues). Positions 616–626 (KKAKKEPKKPK) are enriched in basic residues.

The protein is Protein penguin of Drosophila melanogaster (Fruit fly).